A 122-amino-acid polypeptide reads, in one-letter code: MIQQETRLKVADNSGAREVLTIKVLGGSGRKTANIGDVIVCTVKQATPGGVVKKGEVVKAVIVRTKSGARRSDGSYISFDENACVIIRDDKSPRGTRIFGPVARELRENNFMKIVSLAPEVI.

It belongs to the universal ribosomal protein uL14 family. As to quaternary structure, part of the 50S ribosomal subunit. Forms a cluster with proteins L3 and L19. In the 70S ribosome, L14 and L19 interact and together make contacts with the 16S rRNA in bridges B5 and B8.

Binds to 23S rRNA. Forms part of two intersubunit bridges in the 70S ribosome. The polypeptide is Large ribosomal subunit protein uL14 (Bacillus subtilis (strain 168)).